The sequence spans 130 residues: Iron-sulfur cluster insertion protein ErpA 2 (130 aa).

The iron-sulfur cluster site is built by C58, C122, and C124.

The protein belongs to the HesB/IscA family. In terms of assembly, homodimer. It depends on iron-sulfur cluster as a cofactor.

Its function is as follows. Required for insertion of 4Fe-4S clusters for at least IspG. This is Iron-sulfur cluster insertion protein ErpA 2 from Methylococcus capsulatus (strain ATCC 33009 / NCIMB 11132 / Bath).